Reading from the N-terminus, the 218-residue chain is Thiopurine S-methyltransferase (218 aa).

S-adenosyl-L-methionine-binding residues include tryptophan 10, leucine 45, glutamate 66, and arginine 123.

Belongs to the class I-like SAM-binding methyltransferase superfamily. TPMT family.

Its subcellular location is the cytoplasm. It catalyses the reaction S-adenosyl-L-methionine + a thiopurine = S-adenosyl-L-homocysteine + a thiopurine S-methylether.. This Pseudomonas aeruginosa (strain UCBPP-PA14) protein is Thiopurine S-methyltransferase.